The primary structure comprises 387 residues: Formate-dependent phosphoribosylglycinamide formyltransferase (387 aa).

N(1)-(5-phospho-beta-D-ribosyl)glycinamide is bound by residues Glu-15–Leu-16 and Glu-75. ATP contacts are provided by residues Arg-106, Lys-147, Ser-152 to Gln-157, Glu-187 to Ile-190, and Glu-195. The ATP-grasp domain maps to Asp-111–Leu-301. The Mg(2+) site is built by Glu-260 and Glu-272. N(1)-(5-phospho-beta-D-ribosyl)glycinamide contacts are provided by residues Asp-279, Lys-349, and Arg-356–Arg-357.

This sequence belongs to the PurK/PurT family. In terms of assembly, homodimer.

It carries out the reaction N(1)-(5-phospho-beta-D-ribosyl)glycinamide + formate + ATP = N(2)-formyl-N(1)-(5-phospho-beta-D-ribosyl)glycinamide + ADP + phosphate + H(+). It functions in the pathway purine metabolism; IMP biosynthesis via de novo pathway; N(2)-formyl-N(1)-(5-phospho-D-ribosyl)glycinamide from N(1)-(5-phospho-D-ribosyl)glycinamide (formate route): step 1/1. Functionally, involved in the de novo purine biosynthesis. Catalyzes the transfer of formate to 5-phospho-ribosyl-glycinamide (GAR), producing 5-phospho-ribosyl-N-formylglycinamide (FGAR). Formate is provided by PurU via hydrolysis of 10-formyl-tetrahydrofolate. This Prochlorococcus marinus (strain NATL2A) protein is Formate-dependent phosphoribosylglycinamide formyltransferase.